A 603-amino-acid chain; its full sequence is Zinc finger protein 415 (603 aa).

The C2H2-type 1; degenerate zinc-finger motif lies at 264-286 (YRYIECDKALNHGSHMTVRQVSH). 11 consecutive C2H2-type zinc fingers follow at residues 292–314 (YKCDLCGKVFSQKSNLARHWRVH), 320–342 (YKCNECDRSFSRNSCLALHRRVH), 348–370 (YKCYECDKVFSRNSCLALHQKTH), 376–398 (YTCKECGKAFSVRSTLTNHQVIH), 404–426 (YKCNECGKVFSQTSSLATHQRIH), 432–454 (YKCNECGKVFSQTSSLARHWRIH), 460–482 (YKCNECGKVFSYNSHLASHRRVH), 488–510 (YKCNECGKAFSVHSNLTTHQVIH), 516–538 (YKCNQCGKGFSVHSSLTTHQVIH), 544–566 (YKCNECGKSFSVRPNLTRHQIIH), and 572–594 (YKCSDCGKSFSVRPNLFRHQIIH).

In terms of tissue distribution, expressed in all tissues examined. Isoforms are differentially expressed. Isoform 3 and isoform 5 were highly expressed, isoform 4 moderately expressed, isoform 2 lower expression, the lowest expression level was seem with isoform 1.

The protein localises to the nucleus. It localises to the cytoplasm. Its function is as follows. Involved in transcriptional regulation. Transcriptional activity differed among the various isoforms. All isoforms except isoform 3 seem to suppresses the transcriptional activities of AP-1 and p53/TP53. The protein is Zinc finger protein 415 (ZNF415) of Homo sapiens (Human).